The primary structure comprises 364 residues: tRNA/tmRNA (uracil-C(5))-methyltransferase (364 aa).

S-adenosyl-L-methionine contacts are provided by Gln186, Tyr214, Asn219, Glu235, and Asp295. The active-site Nucleophile is the Cys320. Glu354 functions as the Proton acceptor in the catalytic mechanism.

It belongs to the class I-like SAM-binding methyltransferase superfamily. RNA M5U methyltransferase family. TrmA subfamily.

It carries out the reaction uridine(54) in tRNA + S-adenosyl-L-methionine = 5-methyluridine(54) in tRNA + S-adenosyl-L-homocysteine + H(+). The enzyme catalyses uridine(341) in tmRNA + S-adenosyl-L-methionine = 5-methyluridine(341) in tmRNA + S-adenosyl-L-homocysteine + H(+). In terms of biological role, dual-specificity methyltransferase that catalyzes the formation of 5-methyluridine at position 54 (m5U54) in all tRNAs, and that of position 341 (m5U341) in tmRNA (transfer-mRNA). In Azoarcus sp. (strain BH72), this protein is tRNA/tmRNA (uracil-C(5))-methyltransferase.